The sequence spans 1637 residues: Serine/threonine-protein kinase Genghis Khan (1637 aa).

One can recognise a Protein kinase domain in the interval 100–369; the sequence is FDILKIIGRG…IQDFMDHPWF (270 aa). ATP is bound by residues 106–114 and Lys129; that span reads IGRGAFGEV. Asp224 serves as the catalytic Proton acceptor. Positions 370–440 constitute an AGC-kinase C-terminal domain; that stretch reads VGIDWKNIRQ…SLTSSSTLDS (71 aa). 3 coiled-coil regions span residues 473–587, 643–688, and 839–881; these read VDSV…EDAV, SEKL…LKYT, and DELS…DLQK. The segment at 538–575 is disordered; it reads RNQKQKLSRQVRDKEEELDGAMQKNDSLRNELRKSDKT. A compositionally biased stretch (basic and acidic residues) spans 563-575; that stretch reads DSLRNELRKSDKT. Thr895 carries the post-translational modification Phosphothreonine. Residues 952 to 971 form a disordered region; the sequence is NNKDHSSMKEASVSDLSREE. Residues 989-1039 form a Phorbol-ester/DAG-type zinc finger; the sequence is IHQFLVRTFSSPTKCNHCTSLMVGLTRQGVVCEICGFACHTICCQKVPTTC. The region spanning 1059 to 1177 is the PH domain; sequence GTAYEGYVKV…WVIALGELHR (119 aa). Residues 1203–1489 enclose the CNH domain; the sequence is IRNALCSVII…LPLNNLGNVV (287 aa). The region spanning 1546–1559 is the CRIB domain; sequence ISAPTNFNHISHMG. Ser1584 is subject to Phosphoserine. The tract at residues 1611–1637 is disordered; the sequence is DYGNDNIISRTPSPMASSFMDGLSNND. A compositionally biased stretch (polar residues) spans 1616–1626; it reads NIISRTPSPMA.

The protein belongs to the protein kinase superfamily. AGC Ser/Thr protein kinase family. DMPK subfamily. As to quaternary structure, interacts tightly with GTP-bound but not GDP-bound Cdc42.

The enzyme catalyses L-seryl-[protein] + ATP = O-phospho-L-seryl-[protein] + ADP + H(+). It carries out the reaction L-threonyl-[protein] + ATP = O-phospho-L-threonyl-[protein] + ADP + H(+). Its function is as follows. Acts as a downstream effector for the regulation of actin polymerization by Cdc42. In Drosophila melanogaster (Fruit fly), this protein is Serine/threonine-protein kinase Genghis Khan (gek).